The following is a 287-amino-acid chain: NAD kinase (287 aa).

Aspartate 70 acts as the Proton acceptor in catalysis. NAD(+)-binding positions include 70 to 71 (DG), 144 to 145 (ND), arginine 155, lysine 172, aspartate 174, 185 to 190 (TAYSLS), and glutamine 244.

It belongs to the NAD kinase family. The cofactor is a divalent metal cation.

The protein localises to the cytoplasm. It catalyses the reaction NAD(+) + ATP = ADP + NADP(+) + H(+). Its function is as follows. Involved in the regulation of the intracellular balance of NAD and NADP, and is a key enzyme in the biosynthesis of NADP. Catalyzes specifically the phosphorylation on 2'-hydroxyl of the adenosine moiety of NAD to yield NADP. This is NAD kinase from Solibacter usitatus (strain Ellin6076).